We begin with the raw amino-acid sequence, 232 residues long: Large ribosomal subunit protein uL1 (232 aa).

The protein belongs to the universal ribosomal protein uL1 family. In terms of assembly, part of the 50S ribosomal subunit.

In terms of biological role, binds directly to 23S rRNA. The L1 stalk is quite mobile in the ribosome, and is involved in E site tRNA release. Its function is as follows. Protein L1 is also a translational repressor protein, it controls the translation of the L11 operon by binding to its mRNA. The sequence is that of Large ribosomal subunit protein uL1 from Bacillus velezensis (strain DSM 23117 / BGSC 10A6 / LMG 26770 / FZB42) (Bacillus amyloliquefaciens subsp. plantarum).